We begin with the raw amino-acid sequence, 308 residues long: MPIKIPDTLPAFEALQNEGVRVMTETMAIRQDIRPLQIGLLNLMPNKIKTEVQMARLVGASPLQVEFSLVRVGGHKAKNTSEEHLLSFYQTWEEVKHRKFDGFIITGAPIELLEYEDVTYWDEMKQILDWTTTNVHSTLNVCWGAMAAIYHFHGVPKYTLKEKAFGVYRHQNLKPSSVYLNGFSDDFAVPVSRWTEVRRADIEKVPNLEILMESSEMGVCLVHEQACNRLYMFNHVEYDSTSLADEYFRDVHAGVPIKMPHNYFPHNDPEIPPQNRWRSHAHLFFGNWINELYQTTPYDLEDIGEERL.

Cysteine 142 serves as the catalytic Acyl-thioester intermediate. Substrate-binding residues include lysine 163 and serine 192. Residue histidine 235 is the Proton acceptor of the active site. The active site involves glutamate 237. Arginine 249 provides a ligand contact to substrate.

This sequence belongs to the MetA family.

The protein localises to the cytoplasm. It carries out the reaction L-homoserine + acetyl-CoA = O-acetyl-L-homoserine + CoA. Its pathway is amino-acid biosynthesis; L-methionine biosynthesis via de novo pathway; O-acetyl-L-homoserine from L-homoserine: step 1/1. In terms of biological role, transfers an acetyl group from acetyl-CoA to L-homoserine, forming acetyl-L-homoserine. This chain is Homoserine O-acetyltransferase, found in Rhizobium rhizogenes (strain K84 / ATCC BAA-868) (Agrobacterium radiobacter).